A 586-amino-acid chain; its full sequence is Inner membrane protein YejM (586 aa).

Residues 1-20 (MVTHRQRYREKVSQMVSWGH) are Cytoplasmic-facing. Residues 21–43 (WFALFNILLATLLGSRYLFVADW) traverse the membrane as a helical segment. At 44–57 (PTTLAGRIYSYLSI) the chain is on the periplasmic side. Residues 58 to 80 (VGHFSFLVFATYLLILFPLTFIV) form a helical membrane-spanning segment. Topologically, residues 81-84 (MSQR) are cytoplasmic. The helical transmembrane segment at 85–103 (LMRFLSAILATAGMTLLLI) threads the bilayer. Topologically, residues 104-134 (DSEVFTRFHLHLNPIVWELVINPDQNEMARD) are periplasmic. The helical transmembrane segment at 135–157 (WQLMFISVPVILLIEMLFATWSW) threads the bilayer. Residues 158-168 (QKLRSLTRRRH) are Cytoplasmic-facing. The helical transmembrane segment at 169–191 (FARPLAAFFFVSFIASHLIYIWA) threads the bilayer. The Periplasmic segment spans residues 192–586 (DANFYRPITM…LTEEKRFIAN (395 aa)).

It to H.influenzae HI_0842.

It localises to the cell inner membrane. In Salmonella typhi, this protein is Inner membrane protein YejM (yejM).